Consider the following 244-residue polypeptide: Phosphoadenosine 5'-phosphosulfate reductase (244 aa).

Cysteine 239 (nucleophile; cysteine thiosulfonate intermediate) is an active-site residue.

Belongs to the PAPS reductase family. CysH subfamily.

The protein localises to the cytoplasm. It catalyses the reaction [thioredoxin]-disulfide + sulfite + adenosine 3',5'-bisphosphate + 2 H(+) = [thioredoxin]-dithiol + 3'-phosphoadenylyl sulfate. The protein operates within sulfur metabolism; hydrogen sulfide biosynthesis; sulfite from sulfate: step 3/3. Its function is as follows. Catalyzes the formation of sulfite from phosphoadenosine 5'-phosphosulfate (PAPS) using thioredoxin as an electron donor. The polypeptide is Phosphoadenosine 5'-phosphosulfate reductase (Salmonella schwarzengrund (strain CVM19633)).